The chain runs to 224 residues: Phosphoribosylformylglycinamidine synthase subunit PurQ (224 aa).

A Glutamine amidotransferase type-1 domain is found at 4-224 (RIGVVTFPGT…YSALDAVLTG (221 aa)). The active-site Nucleophile is cysteine 87. Catalysis depends on residues histidine 195 and glutamate 197.

In terms of assembly, part of the FGAM synthase complex composed of 1 PurL, 1 PurQ and 2 PurS subunits.

Its subcellular location is the cytoplasm. It catalyses the reaction N(2)-formyl-N(1)-(5-phospho-beta-D-ribosyl)glycinamide + L-glutamine + ATP + H2O = 2-formamido-N(1)-(5-O-phospho-beta-D-ribosyl)acetamidine + L-glutamate + ADP + phosphate + H(+). The enzyme catalyses L-glutamine + H2O = L-glutamate + NH4(+). It participates in purine metabolism; IMP biosynthesis via de novo pathway; 5-amino-1-(5-phospho-D-ribosyl)imidazole from N(2)-formyl-N(1)-(5-phospho-D-ribosyl)glycinamide: step 1/2. In terms of biological role, part of the phosphoribosylformylglycinamidine synthase complex involved in the purines biosynthetic pathway. Catalyzes the ATP-dependent conversion of formylglycinamide ribonucleotide (FGAR) and glutamine to yield formylglycinamidine ribonucleotide (FGAM) and glutamate. The FGAM synthase complex is composed of three subunits. PurQ produces an ammonia molecule by converting glutamine to glutamate. PurL transfers the ammonia molecule to FGAR to form FGAM in an ATP-dependent manner. PurS interacts with PurQ and PurL and is thought to assist in the transfer of the ammonia molecule from PurQ to PurL. In Mycobacterium bovis (strain ATCC BAA-935 / AF2122/97), this protein is Phosphoribosylformylglycinamidine synthase subunit PurQ.